The sequence spans 203 residues: Holliday junction branch migration complex subunit RuvA (203 aa).

The segment at 1 to 64 (MIGRLRGIIL…EDAQLLYGFN (64 aa)) is domain I. The segment at 65 to 142 (NKQERTLFKE…KGLHGDLFTP (78 aa)) is domain II. A flexible linker region spans residues 143–154 (AVDLVLTSPASP). The interval 155-203 (TSEDAEQEAVAALVALGYKPQEASRMVSKIARPDASSETLIRDALRAAL) is domain III.

Belongs to the RuvA family. In terms of assembly, homotetramer. Forms an RuvA(8)-RuvB(12)-Holliday junction (HJ) complex. HJ DNA is sandwiched between 2 RuvA tetramers; dsDNA enters through RuvA and exits via RuvB. An RuvB hexamer assembles on each DNA strand where it exits the tetramer. Each RuvB hexamer is contacted by two RuvA subunits (via domain III) on 2 adjacent RuvB subunits; this complex drives branch migration. In the full resolvosome a probable DNA-RuvA(4)-RuvB(12)-RuvC(2) complex forms which resolves the HJ.

The protein localises to the cytoplasm. In terms of biological role, the RuvA-RuvB-RuvC complex processes Holliday junction (HJ) DNA during genetic recombination and DNA repair, while the RuvA-RuvB complex plays an important role in the rescue of blocked DNA replication forks via replication fork reversal (RFR). RuvA specifically binds to HJ cruciform DNA, conferring on it an open structure. The RuvB hexamer acts as an ATP-dependent pump, pulling dsDNA into and through the RuvAB complex. HJ branch migration allows RuvC to scan DNA until it finds its consensus sequence, where it cleaves and resolves the cruciform DNA. In Salmonella agona (strain SL483), this protein is Holliday junction branch migration complex subunit RuvA.